We begin with the raw amino-acid sequence, 528 residues long: MTTIERITTPRIRIFDTTLRDGEQSPGCSMSPPQKLVMARALDELGVDIIETGFPASSQSDRDAMALIGRELRRPSLSLAVLSRCLQADIETSARALEAAANPRLHVFLSTSPLHREHKLRMTREQVLESVRKHVSLARSYIDDVEFSAEDATRTELDYLIEVSRAAISAGATTINLPDTVGFTTPEEIREMFQQVIAGVADVPNAANVIFSAHCHNDLGLAVANSLAAIEGGARQVECTVNGIGERAGNCSLEEIAMVLKVRQAFYEQDSSINTPRIVGTSQLLQRLVGMPVQRNKAIVGANAFAHESGIHQHGMLRHRGTYEIMRPEDVGWEDSQMVLGRHSGRAAVEARLRALGFWLEEDELKLVFEQFKGLCEQQRVVTDADLQTLMQGGSNAQGYRLASMTISDVGSRANALVELSDPDGNRVAETAQGDGPVDALFGALSAATGVQLMLDSYHVHSVGIGADARGEANLSVRHEGVEYDGTGTSKDIIEASALAWLDVANRLLRQRQANAASTTEAPAPATA.

Positions 12 to 279 constitute a Pyruvate carboxyltransferase domain; that stretch reads IRIFDTTLRD…DSSINTPRIV (268 aa). Mn(2+) contacts are provided by aspartate 21, histidine 214, histidine 216, and asparagine 250. The regulatory domain stretch occupies residues 401–528; the sequence is RLASMTISDV…TTEAPAPATA (128 aa).

Belongs to the alpha-IPM synthase/homocitrate synthase family. LeuA type 1 subfamily. As to quaternary structure, homodimer. Requires Mn(2+) as cofactor.

It localises to the cytoplasm. The enzyme catalyses 3-methyl-2-oxobutanoate + acetyl-CoA + H2O = (2S)-2-isopropylmalate + CoA + H(+). It functions in the pathway amino-acid biosynthesis; L-leucine biosynthesis; L-leucine from 3-methyl-2-oxobutanoate: step 1/4. In terms of biological role, catalyzes the condensation of the acetyl group of acetyl-CoA with 3-methyl-2-oxobutanoate (2-ketoisovalerate) to form 3-carboxy-3-hydroxy-4-methylpentanoate (2-isopropylmalate). This is 2-isopropylmalate synthase from Stenotrophomonas maltophilia (strain R551-3).